Consider the following 319-residue polypeptide: MDSPAFAVTGMFAAAKVGVTSFTGATEPVSTRRRTSGNVTMAVDAFQKKFQTFGKIGVDYSRPKKLASYKRGGFDAASVEYPNAPSFAGKYSIAPCGQPSGASKILMKYDEYCAKGVLQVFKRNAVPFGVYTTKCTEGTVAGQAQEKRVFNRTMAFRQAQKPVNVRLAEQYEARRKCFILANGCSREEDQFKSMPVSAATFLAGKHESLGTCFRVVTPSNIAEDYIASGVRMQLVAKSNSTGVYGVGSCMEGFAKGDAEARRVAALAAEYRALQQSPAAVTGRQYESSRMAVKLYAQNCSHEQEQLYKWPATAAAFCRY.

The N-terminal 71 residues, 1-71 (MDSPAFAVTG…RPKKLASYKR (71 aa)), are a transit peptide targeting the chloroplast. Residues Cys96 and Cys135 each contribute to the phycourobilin site. Cys212 serves as a coordination point for (2R,3E)-phycoerythrobilin. Residue Cys299 participates in phycourobilin binding.

In terms of assembly, heteromer of 4 alpha, 4 beta and one gamma chains. Contains four covalently linked bilin chromophores.

The protein localises to the plastid. The protein resides in the chloroplast thylakoid membrane. This chain is R-phycoerythrin gamma chain, chloroplastic, found in Corallina officinalis (Coral seaweed).